The chain runs to 324 residues: Signal peptidase I (324 aa).

Topologically, residues 1–3 (MAN) are periplasmic. Residues 4–22 (MFALILVIATLVTGILWCV) form a helical membrane-spanning segment. The Cytoplasmic portion of the chain corresponds to 23-58 (DKFVFAPKRRARQAAAQTASGDALDNATLNKVAPKP). Residues 59 to 77 (GWLETGASVFPVLAIVLIV) form a helical membrane-spanning segment. Residues 78 to 324 (RSFLYEPFQI…VRLSRIGGIH (247 aa)) are Periplasmic-facing. Catalysis depends on residues serine 91 and lysine 146.

The protein belongs to the peptidase S26 family.

It is found in the cell inner membrane. The catalysed reaction is Cleavage of hydrophobic, N-terminal signal or leader sequences from secreted and periplasmic proteins.. The protein is Signal peptidase I (lepB) of Salmonella typhi.